We begin with the raw amino-acid sequence, 1381 residues long: Hepatocyte growth factor receptor (1381 aa).

The signal sequence occupies residues 1 to 24 (MKALAVLGPGLLVHLLTLVQKSGG). At 25 to 932 (ECKEALVKSA…VIVQPDQNFT (908 aa)) the chain is on the extracellular side. A Sema domain is found at 27 to 515 (KEALVKSAMN…TGKTITKIPL (489 aa)). N-linked (GlcNAc...) asparagine glycans are attached at residues Asn45 and Asn74. Intrachain disulfides connect Cys95/Cys101, Cys98/Cys159, Cys133/Cys141, Cys172/Cys175, Cys298/Cys363, and Cys385/Cys397. An N-linked (GlcNAc...) asparagine glycan is attached at Asn106. An N-linked (GlcNAc...) asparagine glycan is attached at Asn358. N-linked (GlcNAc...) asparagine glycosylation occurs at Asn399. Intrachain disulfides connect Cys520–Cys538, Cys526–Cys561, Cys529–Cys545, and Cys541–Cys551. IPT/TIG domains lie at 563 to 655 (PTIY…FSYV), 657 to 739 (PIIT…FNYR), and 742 to 836 (PIVD…LIYV). Thr582 carries O-linked (Man) threonine glycosylation. N-linked (GlcNAc...) asparagine glycosylation is found at Asn607 and Asn635. O-linked (Man) threonine glycosylation is found at Thr676 and Thr761. N-linked (GlcNAc...) asparagine glycosylation is found at Asn785, Asn879, and Asn930. A helical membrane pass occupies residues 933–955 (GLIVGVISISVLLSLLFGLFLWL). Residues 956–1381 (KRRKQIKDLG…QDHVDGEGDT (426 aa)) lie on the Cytoplasmic side of the membrane. Ser966 is modified (phosphoserine). Thr977 bears the Phosphothreonine mark. Ser990, Ser997, and Ser1000 each carry phosphoserine. A Phosphotyrosine modification is found at Tyr1003. The Protein kinase domain occupies 1078-1345 (VHFNEVIGRG…RISAIFSAFI (268 aa)). ATP is bound by residues 1084-1092 (IGRGHFGCV) and Lys1110. Asp1204 serves as the catalytic Proton acceptor. An interaction with RANBP9 region spans residues 1212 to 1381 (LDENFTVKVA…QDHVDGEGDT (170 aa)). Position 1230 is a phosphotyrosine (Tyr1230). Tyr1234 and Tyr1235 each carry phosphotyrosine; by autocatalysis. Position 1289 is a phosphothreonine (Thr1289). The segment at 1320–1359 (WHPKAEQRPSFAELVSRISAIFSAFIGEHYVHVNATYVNV) is interaction with MUC20. Phosphotyrosine; by autocatalysis occurs at positions 1349 and 1356. Phosphotyrosine is present on Tyr1365.

Belongs to the protein kinase superfamily. Tyr protein kinase family. As to quaternary structure, heterodimer made of an alpha chain (50 kDa) and a beta chain (145 kDa) which are disulfide linked. Binds PLXNB1. Interacts when phosphorylated with downstream effectors including STAT3, PIK3R1, SRC, PCLG1, GRB2 and GAB1. Interacts with SPSB1, SPSB2 and SPSB4. Interacts with INPP5D/SHIP1. When phosphorylated at Tyr-1356, interacts with INPPL1/SHIP2. Interacts with RANBP9 and RANBP10, as well as SPSB1, SPSB2, SPSB3 and SPSB4. SPSB1 binding occurs in the presence and in the absence of HGF, however HGF treatment has a positive effect on this interaction. Interacts with MUC20; prevents interaction with GRB2 and suppresses hepatocyte growth factor-induced cell proliferation. Interacts with GRB10. Interacts with PTPN1 and PTPN2. Interacts with HSP90AA1 and HSP90AB1; the interaction suppresses MET kinase activity. Interacts with tensin TNS3. Interacts (when phosphorylated) with tensin TNS4 (via SH2 domain); the interaction increases MET protein stability by inhibiting MET endocytosis and subsequent lysosomal degradation. In terms of processing, autophosphorylated in response to ligand binding on Tyr-1234 and Tyr-1235 in the kinase domain leading to further phosphorylation of Tyr-1349 and Tyr-1356 in the C-terminal multifunctional docking site. Dephosphorylated by PTPRJ at Tyr-1349 and Tyr-1365. Dephosphorylated by PTPN1 and PTPN2. Ubiquitinated. Ubiquitination by CBL regulates the receptor stability and activity through proteasomal degradation. Post-translationally, O-mannosylation of IPT/TIG domains by TMEM260 is required for protein maturation. O-mannosylated residues are composed of single mannose glycans that are not elongated or modified.

Its subcellular location is the membrane. It catalyses the reaction L-tyrosyl-[protein] + ATP = O-phospho-L-tyrosyl-[protein] + ADP + H(+). Its activity is regulated as follows. In its inactive state, the C-terminal tail interacts with the catalytic domain and inhibits the kinase activity. Upon ligand binding, the C-terminal tail is displaced and becomes phosphorylated, thus increasing the kinase activity. Its function is as follows. Receptor tyrosine kinase that transduces signals from the extracellular matrix into the cytoplasm by binding to hepatocyte growth factor/HGF ligand. Regulates many physiological processes including proliferation, scattering, morphogenesis and survival. Ligand binding at the cell surface induces autophosphorylation of MET on its intracellular domain that provides docking sites for downstream signaling molecules. Following activation by ligand, interacts with the PI3-kinase subunit PIK3R1, PLCG1, SRC, GRB2, STAT3 or the adapter GAB1. Recruitment of these downstream effectors by MET leads to the activation of several signaling cascades including the RAS-ERK, PI3 kinase-AKT, or PLCgamma-PKC. The RAS-ERK activation is associated with the morphogenetic effects while PI3K/AKT coordinates prosurvival effects. During embryonic development, MET signaling plays a role in gastrulation, development and migration of muscles and neuronal precursors, angiogenesis and kidney formation. In adults, participates in wound healing as well as organ regeneration and tissue remodeling. Also promotes differentiation and proliferation of hematopoietic cells. In Rhinolophus ferrumequinum (Greater horseshoe bat), this protein is Hepatocyte growth factor receptor (MET).